The sequence spans 211 residues: MRLGLFGGSFDPPHVGHLLVAQDALEALRLDHLLIIPAAQQPLKGAHQTSAHHRLAMVRACFEGVQGIEVDPVEIERGGLSFMVDTVEAVRRRWPDAHLHLLVGRDVVPTLPRWHDVDRLLSMVRLVVLTRDAAPQEGPLLIDAESDSGVVAEVLSTRQVDMSSTEIRSRVRDGRSIRGFVPDAVATYIASTGLYREYPRGSADTERSERA.

It belongs to the NadD family.

It carries out the reaction nicotinate beta-D-ribonucleotide + ATP + H(+) = deamido-NAD(+) + diphosphate. Its pathway is cofactor biosynthesis; NAD(+) biosynthesis; deamido-NAD(+) from nicotinate D-ribonucleotide: step 1/1. Functionally, catalyzes the reversible adenylation of nicotinate mononucleotide (NaMN) to nicotinic acid adenine dinucleotide (NaAD). The sequence is that of Probable nicotinate-nucleotide adenylyltransferase from Gemmatimonas aurantiaca (strain DSM 14586 / JCM 11422 / NBRC 100505 / T-27).